Reading from the N-terminus, the 156-residue chain is Small ribosomal subunit protein uS7 (156 aa).

This sequence belongs to the universal ribosomal protein uS7 family. As to quaternary structure, part of the 30S ribosomal subunit. Contacts proteins S9 and S11.

Functionally, one of the primary rRNA binding proteins, it binds directly to 16S rRNA where it nucleates assembly of the head domain of the 30S subunit. Is located at the subunit interface close to the decoding center, probably blocks exit of the E-site tRNA. This is Small ribosomal subunit protein uS7 from Shewanella piezotolerans (strain WP3 / JCM 13877).